Reading from the N-terminus, the 264-residue chain is Occludin/ELL domain-containing protein 1 (264 aa).

Residues 1-10 (MHNPDGSASP) are compositionally biased toward polar residues. A disordered region spans residues 1 to 112 (MHNPDGSASP…QPGPHKAKTK (112 aa)). Positions 96–105 (PRPPCQPQPG) are enriched in pro residues. In terms of domain architecture, OCEL spans 147–257 (PDYELKYPPV…QIQKFDDQGD (111 aa)).

The protein belongs to the ELL/occludin family.

In Homo sapiens (Human), this protein is Occludin/ELL domain-containing protein 1 (OCEL1).